The chain runs to 178 residues: Large ribosomal subunit protein bL25 (178 aa).

Belongs to the bacterial ribosomal protein bL25 family. CTC subfamily. Part of the 50S ribosomal subunit; part of the 5S rRNA/L5/L18/L25 subcomplex. Contacts the 5S rRNA. Binds to the 5S rRNA independently of L5 and L18.

Its function is as follows. This is one of the proteins that binds to the 5S RNA in the ribosome where it forms part of the central protuberance. In Helicobacter pylori (strain ATCC 700392 / 26695) (Campylobacter pylori), this protein is Large ribosomal subunit protein bL25.